The chain runs to 345 residues: D-fructose 1,6-bisphosphatase class 2/sedoheptulose 1,7-bisphosphatase (345 aa).

D33, E57, D97, and E100 together coordinate Mn(2+). Residues 100–102 (EGT), Y131, 176–178 (RDR), and 198–200 (DGD) each bind substrate. E225 is a Mn(2+) binding site.

It belongs to the FBPase class 2 family. In terms of assembly, homotetramer. Requires Mn(2+) as cofactor.

The catalysed reaction is beta-D-fructose 1,6-bisphosphate + H2O = beta-D-fructose 6-phosphate + phosphate. It catalyses the reaction D-sedoheptulose 1,7-bisphosphate + H2O = D-sedoheptulose 7-phosphate + phosphate. It participates in carbohydrate biosynthesis; Calvin cycle. Catalyzes the hydrolysis of fructose 1,6-bisphosphate (Fru 1,6-P2) and sedoheptulose 1,7-bisphosphate (Sed 1,7-P2) to fructose 6-phosphate and sedoheptulose 7-phosphate, respectively. The polypeptide is D-fructose 1,6-bisphosphatase class 2/sedoheptulose 1,7-bisphosphatase (Trichormus variabilis (strain ATCC 29413 / PCC 7937) (Anabaena variabilis)).